The primary structure comprises 244 residues: Uridylate kinase (244 aa).

Residue 17–20 (KVSG) coordinates ATP. The tract at residues 25–30 (GEKGFG) is involved in allosteric activation by GTP. UMP is bound at residue Gly59. The ATP site is built by Gly60 and Arg64. UMP contacts are provided by residues Asp80 and 141–148 (VGNPFFTT). Thr168, Gln169, Tyr174, and Asp177 together coordinate ATP.

Belongs to the UMP kinase family. As to quaternary structure, homohexamer.

Its subcellular location is the cytoplasm. It catalyses the reaction UMP + ATP = UDP + ADP. It participates in pyrimidine metabolism; CTP biosynthesis via de novo pathway; UDP from UMP (UMPK route): step 1/1. Allosterically activated by GTP. Inhibited by UTP. In terms of biological role, catalyzes the reversible phosphorylation of UMP to UDP. The sequence is that of Uridylate kinase from Ehrlichia canis (strain Jake).